The primary structure comprises 337 residues: MNAFIQGLPKVELHLHIEGSLEPELMFKLAKRNGIDIPYSSPSELREAYQFEDLQSFLDLYYQGANVLRTEQDFYDLTWEYLEHCKADNVIHTEIFFDPQTHTERGIDFDTVLNGISRALTDGREKLGITSQIIACFLRHLSEESAMETLQSVLKHRDKIIGVGLDSSEKGHPPAKFLRVFQQAKEAGLLTVAHAGEEGPAQNITDAIEMLEVSRVDHGVRCVEDEALVGSLIETKMPLTVCPLSNIKLCVFDEMGQHNIVELLRKGVAVTINSDDPVYFGGYMTDNFLAVNQAHPMIKEELAKFTLNAIDASFIDNELKAQYRHKVEQYVAQHSSM.

Residues His14, His16, and His194 each coordinate Zn(2+). Glu197 functions as the Proton donor in the catalytic mechanism. Asp275 contributes to the Zn(2+) binding site. Substrate is bound at residue Asp276.

It belongs to the metallo-dependent hydrolases superfamily. Adenosine and AMP deaminases family. Adenine deaminase type 2 subfamily. The cofactor is Zn(2+).

The catalysed reaction is adenine + H2O + H(+) = hypoxanthine + NH4(+). In terms of biological role, catalyzes the hydrolytic deamination of adenine to hypoxanthine. Plays an important role in the purine salvage pathway and in nitrogen catabolism. The protein is Adenine deaminase of Vibrio parahaemolyticus serotype O3:K6 (strain RIMD 2210633).